A 156-amino-acid chain; its full sequence is Small ribosomal subunit protein uS7 (156 aa).

The protein belongs to the universal ribosomal protein uS7 family. In terms of assembly, part of the 30S ribosomal subunit. Contacts proteins S9 and S11.

In terms of biological role, one of the primary rRNA binding proteins, it binds directly to 16S rRNA where it nucleates assembly of the head domain of the 30S subunit. Is located at the subunit interface close to the decoding center, probably blocks exit of the E-site tRNA. This is Small ribosomal subunit protein uS7 from Syntrophus aciditrophicus (strain SB).